Here is a 462-residue protein sequence, read N- to C-terminus: Putative E3 ubiquitin-protein ligase XBAT35 (462 aa).

ANK repeat units lie at residues 6-35 (SKGE…DLEW), 39-69 (EGKT…NVNA), and 75-104 (HAGT…NPLV). Disordered stretches follow at residues 277 to 341 (HPPV…GKAS) and 356 to 402 (SSPS…EGER). The segment covering 304–317 (SLHTTMSDPSNLNH) has biased composition (polar residues). The span at 319–341 (SIGQASSSSGPSSSTAPPSGKAS) shows a compositional bias: low complexity. The segment at 411–450 (CAICLDAPSEAVCVPCGHVAGCMSCLKEIKSKNWGCPVCR) adopts an RING-type zinc-finger fold.

The catalysed reaction is S-ubiquitinyl-[E2 ubiquitin-conjugating enzyme]-L-cysteine + [acceptor protein]-L-lysine = [E2 ubiquitin-conjugating enzyme]-L-cysteine + N(6)-ubiquitinyl-[acceptor protein]-L-lysine.. The protein operates within protein modification; protein ubiquitination. In terms of biological role, no E3 ubiquitin-protein ligase activity observed when associated with the E2 enzyme UBC8 in vitro. In Arabidopsis thaliana (Mouse-ear cress), this protein is Putative E3 ubiquitin-protein ligase XBAT35 (XBAT35).